Here is a 126-residue protein sequence, read N- to C-terminus: uncharacterized protein (126 aa).

This is an uncharacterized protein from Columba livia (Rock dove).